We begin with the raw amino-acid sequence, 100 residues long: High mobility group protein C (100 aa).

A DNA-binding region (HMG box) is located at residues 12-80 (PKRPLSAFFL…KYEKDMQAYE (69 aa)). Residues 81-100 (KKYGKPEKQKKIKKNKKGSK) form a disordered region. Residues 90–100 (KKIKKNKKGSK) are compositionally biased toward basic residues.

It localises to the nucleus. The protein localises to the chromosome. In Tetrahymena thermophila, this protein is High mobility group protein C.